We begin with the raw amino-acid sequence, 249 residues long: Basigin (249 aa).

The Ig-like C2-type domain maps to 1-82 (AAGTIQTSVN…VGRSNIVVEG (82 aa)). Residues 1–187 (AAGTIQTSVN…MTLRVRSRLA (187 aa)) lie on the Extracellular side of the membrane. 2 cysteine pairs are disulfide-bonded: cysteine 20–cysteine 66 and cysteine 105–cysteine 165. Asparagine 23, asparagine 132, and asparagine 166 each carry an N-linked (GlcNAc...) asparagine glycan. An Ig-like V-type domain is found at 84–179 (PRIKVGKKSE…TQGSVQEIMT (96 aa)). A helical transmembrane segment spans residues 188-208 (ALWPFLGIVAEVLVLVTIIFI). Over 209–249 (YEKRRKPDQTLDEDDPGAAPLKGSGHHMNDKDKNVRQRNAT) the chain is Cytoplasmic. The segment at 216 to 249 (DQTLDEDDPGAAPLKGSGHHMNDKDKNVRQRNAT) is disordered. Threonine 218 carries the post-translational modification Phosphothreonine. Serine 232 is modified (phosphoserine).

As to quaternary structure, homooligomer. Interacts with VEGFA, KDR/VEGFR2, PPIA/CYPA, SLC16A12, SLC16A11, ATP1B2, MAG, L1CAM and AJAP1. Interacts with SLC16A3; interaction mediates SLC16A3 targeting to the plasma membrane. Interacts with SLC16A1; interaction mediates SLC16A1 targeting to the plasma membrane. Interacts with PPIL2; regulates BSG transport to the cell membrane. Interacts with XKR8; promoting its localization at the cell membrane. Interacts with SLC16A6; this interaction mediates targeting to the plasma membrane.

Its subcellular location is the cell membrane. It is found in the endoplasmic reticulum membrane. It localises to the basolateral cell membrane. In terms of biological role, signaling receptor for cyclophilins, essential for PPIA/CYPA and PPIB/CYPB-dependent signaling related to chemotaxis and adhesion of immune cells. Plays an important role in targeting the monocarboxylate transporters SLC16A1/GLUT1, SLC16A3, SLC16A8, SLC16A11 and SLC16A12 to the plasma membrane. Acts as a coreceptor for vascular endothelial growth factor receptor 2 (KDR/VEGFR2) in endothelial cells enhancing its VEGFA-mediated activation and downstream signaling. Promotes angiogenesis through EPAS1/HIF2A-mediated up-regulation of VEGFA and KDR/VEGFR2 in endothelial cells. The polypeptide is Basigin (BSG) (Cricetulus griseus (Chinese hamster)).